Reading from the N-terminus, the 442-residue chain is L-seryl-tRNA(Sec) selenium transferase (442 aa).

Lys-284 carries the post-translational modification N6-(pyridoxal phosphate)lysine.

It belongs to the SelA family. It depends on pyridoxal 5'-phosphate as a cofactor.

Its subcellular location is the cytoplasm. It carries out the reaction L-seryl-tRNA(Sec) + selenophosphate + H(+) = L-selenocysteinyl-tRNA(Sec) + phosphate. Its pathway is aminoacyl-tRNA biosynthesis; selenocysteinyl-tRNA(Sec) biosynthesis; selenocysteinyl-tRNA(Sec) from L-seryl-tRNA(Sec) (bacterial route): step 1/1. Functionally, converts seryl-tRNA(Sec) to selenocysteinyl-tRNA(Sec) required for selenoprotein biosynthesis. The chain is L-seryl-tRNA(Sec) selenium transferase from Campylobacter fetus subsp. fetus (strain 82-40).